The primary structure comprises 1058 residues: Carbamoyl phosphate synthase pyrimidine-specific large chain (1058 aa).

Residues 1–401 (MPKRTDIHKI…ATLKAVRSLE (401 aa)) are carboxyphosphate synthetic domain. 12 residues coordinate ATP: arginine 129, arginine 169, glycine 175, glycine 176, glutamine 208, isoleucine 210, glutamate 215, glycine 241, isoleucine 242, histidine 243, glutamine 284, and glutamate 298. Residues 133 to 327 (KALMEELGEP…IAKMAAKIAV (195 aa)) enclose the ATP-grasp 1 domain. Mg(2+) contacts are provided by glutamine 284, glutamate 298, and asparagine 300. Mn(2+) is bound by residues glutamine 284, glutamate 298, and asparagine 300. Residues 402 to 546 (IGVHHVEEPA…YGTYEFENES (145 aa)) are oligomerization domain. The tract at residues 547–929 (IVTKRPSVLV…ALYKAFEAAK (383 aa)) is carbamoyl phosphate synthetic domain. Residues 671–861 (DKVIKALAIP…MAQVATRAIL (191 aa)) enclose the ATP-grasp 2 domain. Arginine 707, serine 746, leucine 748, glutamate 752, glycine 777, valine 778, histidine 779, serine 780, glutamine 820, and glutamate 832 together coordinate ATP. Glutamine 820, glutamate 832, and asparagine 834 together coordinate Mg(2+). Positions 820, 832, and 834 each coordinate Mn(2+). The 129-residue stretch at 930-1058 (LHVPSHGNVL…ESQSFVTQAL (129 aa)) folds into the MGS-like domain. Residues 930-1058 (LHVPSHGNVL…ESQSFVTQAL (129 aa)) form an allosteric domain region.

The protein belongs to the CarB family. In terms of assembly, composed of two chains; the small (or glutamine) chain promotes the hydrolysis of glutamine to ammonia, which is used by the large (or ammonia) chain to synthesize carbamoyl phosphate. Tetramer of heterodimers (alpha,beta)4. The cofactor is Mg(2+). Mn(2+) serves as cofactor.

It carries out the reaction hydrogencarbonate + L-glutamine + 2 ATP + H2O = carbamoyl phosphate + L-glutamate + 2 ADP + phosphate + 2 H(+). The catalysed reaction is hydrogencarbonate + NH4(+) + 2 ATP = carbamoyl phosphate + 2 ADP + phosphate + 2 H(+). It participates in amino-acid biosynthesis; L-arginine biosynthesis; carbamoyl phosphate from bicarbonate: step 1/1. The protein operates within pyrimidine metabolism; UMP biosynthesis via de novo pathway; (S)-dihydroorotate from bicarbonate: step 1/3. Small subunit of the glutamine-dependent carbamoyl phosphate synthetase (CPSase). CPSase catalyzes the formation of carbamoyl phosphate from the ammonia moiety of glutamine, carbonate, and phosphate donated by ATP, constituting the first step of the biosynthetic pathway leading to pyrimidine nucleotides. The large subunit (synthetase) binds the substrates ammonia (free or transferred from glutamine from the small subunit), hydrogencarbonate and ATP and carries out an ATP-coupled ligase reaction, activating hydrogencarbonate by forming carboxy phosphate which reacts with ammonia to form carbamoyl phosphate. In Lactiplantibacillus plantarum (strain ATCC BAA-793 / NCIMB 8826 / WCFS1) (Lactobacillus plantarum), this protein is Carbamoyl phosphate synthase pyrimidine-specific large chain (pyrAB).